The sequence spans 114 residues: uncharacterized protein (114 aa).

Positions 1–20 (MGLSRWHDKNSRPAEEKSEE) are enriched in basic and acidic residues. The segment at 1-22 (MGLSRWHDKNSRPAEEKSEEMQ) is disordered.

In terms of biological role, may be involved in phosphatase regulation and/or generation of precursor metabolites and energy. This is an uncharacterized protein from Saccharomyces cerevisiae (strain ATCC 204508 / S288c) (Baker's yeast).